We begin with the raw amino-acid sequence, 284 residues long: Elongation factor Ts (284 aa).

Positions 80 to 83 (TDFV) are involved in Mg(2+) ion dislocation from EF-Tu.

The protein belongs to the EF-Ts family.

Its subcellular location is the cytoplasm. Its function is as follows. Associates with the EF-Tu.GDP complex and induces the exchange of GDP to GTP. It remains bound to the aminoacyl-tRNA.EF-Tu.GTP complex up to the GTP hydrolysis stage on the ribosome. This is Elongation factor Ts from Neisseria meningitidis serogroup C (strain 053442).